We begin with the raw amino-acid sequence, 371 residues long: MSKRDYYEVLGLSKGASTDEIKKAYRRLAKKYHPDVSKEENAIEKFKEVQEAYEVLSDDQKRAQYDQFGHAGANQGFGGFGGGGDFGGGFGFEDIFSSFFGGGGGRRRDPNAPRQGADLQYQVTLDFEEAIFGKELNVEIPVEDPCDTCKGSGAKPGTSKETCKHCSGSGQVSVEQNTPFGRIVNRQACGHCSGTGQIIKEKCTTCHGSGKVRKRKKINVKIPAGIDNGQQIRVSGKGEAGVNGGPAGDLYVVVHVRNHEFFEREGDHIICEMPLTFAQMALGDEVEVPTVHGKVKLKIPAGTQTGTEFRLKGKGAPNVRGYGQGDQYVVVRVVVPTKLTSQQKDLLREFAGQEEQDDSLFGKLKRAFKGE.

The region spanning 5–69 (DYYEVLGLSK…QKRAQYDQFG (65 aa)) is the J domain. A CR-type zinc finger spans residues 133 to 215 (GKELNVEIPV…CHGSGKVRKR (83 aa)). 8 residues coordinate Zn(2+): C146, C149, C163, C166, C189, C192, C203, and C206. CXXCXGXG motif repeat units lie at residues 146-153 (CDTCKGSG), 163-170 (CKHCSGSG), 189-196 (CGHCSGTG), and 203-210 (CTTCHGSG).

It belongs to the DnaJ family. In terms of assembly, homodimer. Zn(2+) is required as a cofactor.

The protein resides in the cytoplasm. In terms of biological role, participates actively in the response to hyperosmotic and heat shock by preventing the aggregation of stress-denatured proteins and by disaggregating proteins, also in an autonomous, DnaK-independent fashion. Unfolded proteins bind initially to DnaJ; upon interaction with the DnaJ-bound protein, DnaK hydrolyzes its bound ATP, resulting in the formation of a stable complex. GrpE releases ADP from DnaK; ATP binding to DnaK triggers the release of the substrate protein, thus completing the reaction cycle. Several rounds of ATP-dependent interactions between DnaJ, DnaK and GrpE are required for fully efficient folding. Also involved, together with DnaK and GrpE, in the DNA replication of plasmids through activation of initiation proteins. The polypeptide is Chaperone protein DnaJ (Bacillus cereus (strain G9842)).